Here is a 330-residue protein sequence, read N- to C-terminus: L-lactate dehydrogenase (330 aa).

Residues valine 31, aspartate 52, lysine 57, and 96-97 (GA) contribute to the NAD(+) site. Residues glutamine 99, arginine 105, and 137 to 140 (NPVD) contribute to the substrate site. NAD(+) is bound by residues 135-137 (VSN) and serine 160. Substrate is bound at residue 165-168 (DTAR). Residues arginine 170 and histidine 185 each coordinate beta-D-fructose 1,6-bisphosphate. The active-site Proton acceptor is the histidine 192. Phosphotyrosine is present on tyrosine 238. Threonine 247 contributes to the substrate binding site.

The protein belongs to the LDH/MDH superfamily. LDH family. In terms of assembly, homotetramer.

It is found in the cytoplasm. It carries out the reaction (S)-lactate + NAD(+) = pyruvate + NADH + H(+). It participates in fermentation; pyruvate fermentation to lactate; (S)-lactate from pyruvate: step 1/1. With respect to regulation, allosterically activated by fructose 1,6-bisphosphate (FBP). In terms of biological role, catalyzes the conversion of lactate to pyruvate. The protein is L-lactate dehydrogenase of Gloeobacter violaceus (strain ATCC 29082 / PCC 7421).